The chain runs to 533 residues: Large neutral amino acids transporter small subunit 2 (533 aa).

Residues 1–33 form a disordered region; it reads MEKGTRQRNNTAKNHPDRGSDTSPEAEASSGGG. Residues 1 to 45 are Cytoplasmic-facing; the sequence is MEKGTRQRNNTAKNHPDRGSDTSPEAEASSGGGGVALKKEIGLVS. Ser-20, Ser-23, Ser-29, and Ser-30 each carry phosphoserine. A helical transmembrane segment spans residues 46 to 66; that stretch reads ACGIIVGNIIGSGIFVSPKGV. Position 54 (Ile-54) interacts with L-leucine. Over 67 to 74 the chain is Extracellular; it reads LENAGSVG. Residues 75–96 form a helical membrane-spanning segment; the sequence is LALIVWIVTGVITAVGALCYAE. The Cytoplasmic portion of the chain corresponds to 97–117; the sequence is LGVTIPKSGGDYSYVKDIFGG. The chain crosses the membrane as a helical span at residues 118 to 150; sequence LAGFLRLWIAVLVIYPTNQAVIALTFSNYVLQP. Asn-135 provides a ligand contact to L-tryptophan. Residues 151–158 are Extracellular-facing; the sequence is LFPTCFPP. A helical transmembrane segment spans residues 159 to 179; the sequence is ESGLRLLAAICLLLLTWVNCS. Residues 180–182 are Cytoplasmic-facing; the sequence is SVR. The helical transmembrane segment at 183-211 threads the bilayer; sequence WATRVQDIFTAGKLLALALIIIMGVVQIC. At 212–231 the chain is on the extracellular side; it reads KGEFFWLEPKNAFENFQEPD. A helical membrane pass occupies residues 232–253; it reads IGLVALAFLQGSFAYGGWNFLN. Residue Gly-247 participates in L-leucine binding. Over 254 to 266 the chain is Cytoplasmic; sequence YVTEELVDPYKNL. Residues 267-288 traverse the membrane as a helical segment; it reads PRAIFISIPLVTFVYVFANIAY. The Extracellular segment spans residues 289 to 313; that stretch reads VTAMSPQELLASNAVAVTFGEKLLG. Residues 314 to 339 form a helical membrane-spanning segment; that stretch reads VMAWIMPISVALSTFGGVNGSLFTSS. At 340–365 the chain is on the cytoplasmic side; sequence RLFFAGAREGHLPSVLAMIHVKRCTP. Residues 366 to 383 traverse the membrane as a helical segment; the sequence is IPALLFTCLSTLLMLVTS. The Extracellular portion of the chain corresponds to 384–387; it reads DMYT. Residues 388 to 409 form a helical membrane-spanning segment; the sequence is LINYVGFINYLFYGVTVAGQIV. Position 396 (Asn-396) interacts with L-tryptophan. Residues 410-424 lie on the Cytoplasmic side of the membrane; that stretch reads LRWKKPDIPRPIKIS. Helical transmembrane passes span 425-447 and 448-467; these read LLFPIIYLLFWAFLLIFSLWSEP and VVCGIGLAIMLTGVPVYFLG. Topologically, residues 468 to 533 are cytoplasmic; that stretch reads VYWQHKPKCF…VKDPDSEEQP (66 aa). The interval 500–533 is disordered; it reads GDSGTEETIDDVEEQHKPIFQPTPVKDPDSEEQP. The segment covering 502–512 has biased composition (acidic residues); it reads SGTEETIDDVE. Ser-529 bears the Phosphoserine mark.

The protein belongs to the amino acid-polyamine-organocation (APC) superfamily. L-type amino acid transporter (LAT) (TC 2.A.3.8) family. In terms of assembly, disulfide-linked heterodimer composed of the catalytic light chain subunit SLC7A8 and the heavy chain subunit SLC3A2. SLC3A2 acts as a chaperone for correct plasma membrane trafficking and stabilization of SLC7A8 and modulates the substrate affinity and specificity of SLC7A8. ICAM-1 associates with the heterodimer SLC3A2/SLC7A8; facilitates leucine uptake. As to expression, expression is seen in jejunum mucosa and the epithelial cells of the jejunum, ileum and colon, as well as in kidney, placenta, brain, testis and skeletal muscle. Expressed in retina, inner blood-retinal barrier of retina, retinal vascular endothelial cells. Also expressed in the intestinal epithelial cell line IEC-6 and in the retinal capillary endothelial cell line TR-iBRB2.

Its subcellular location is the cell membrane. The protein resides in the basolateral cell membrane. It carries out the reaction L-dopa(out) + L-phenylalanine(in) = L-dopa(in) + L-phenylalanine(out). The catalysed reaction is 3,3'-diiodo-L-thyronine(out) = 3,3'-diiodo-L-thyronine(in). It catalyses the reaction L-histidine(in) + L-phenylalanine(out) = L-histidine(out) + L-phenylalanine(in). The enzyme catalyses L-tryptophan(in) + L-phenylalanine(out) = L-tryptophan(out) + L-phenylalanine(in). It carries out the reaction L-isoleucine(in) + L-phenylalanine(out) = L-isoleucine(out) + L-phenylalanine(in). The catalysed reaction is L-valine(in) + L-phenylalanine(out) = L-valine(out) + L-phenylalanine(in). It catalyses the reaction L-leucine(in) + L-phenylalanine(out) = L-leucine(out) + L-phenylalanine(in). The enzyme catalyses L-glutamine(in) + L-phenylalanine(out) = L-glutamine(out) + L-phenylalanine(in). It carries out the reaction L-cysteine(in) + L-phenylalanine(out) = L-cysteine(out) + L-phenylalanine(in). The catalysed reaction is L-phenylalanine(out) + L-methionine(in) = L-phenylalanine(in) + L-methionine(out). It catalyses the reaction L-leucine(out) + L-methionine(in) = L-leucine(in) + L-methionine(out). The enzyme catalyses L-cysteine(out) + L-methionine(in) = L-cysteine(in) + L-methionine(out). It carries out the reaction S-methylmercury-L-cysteine(out) + L-methionine(in) = S-methylmercury-L-cysteine(in) + L-methionine(out). The catalysed reaction is S-methylmercury-L-cysteine(in) + L-leucine(out) = S-methylmercury-L-cysteine(out) + L-leucine(in). It catalyses the reaction S-methylmercury-L-cysteine(in) + L-phenylalanine(out) = S-methylmercury-L-cysteine(out) + L-phenylalanine(in). The enzyme catalyses L-phenylalanine(out) + L-serine(in) = L-phenylalanine(in) + L-serine(out). It carries out the reaction L-phenylalanine(out) + glycine(in) = L-phenylalanine(in) + glycine(out). The catalysed reaction is L-phenylalanine(out) + L-alanine(in) = L-phenylalanine(in) + L-alanine(out). It catalyses the reaction 3,3',5-triiodo-L-thyronine(out) = 3,3',5-triiodo-L-thyronine(in). Leucine transport activity is inhibited by 2-amino-bicyclo-(2,2,1)-heptane-2-carboxylate (BCH), glycine, L-isomers of the neutral amino acids and histidine. Functionally, associates with SLC3A2 to form a functional heterodimeric complex that translocates small and large neutral amino acids with broad specificity and a stoichiometry of 1:1. Functions as amino acid antiporter mediating the influx of extracellular essential amino acids mainly in exchange with the efflux of highly concentrated intracellular amino acids. Has relatively symmetrical selectivities but strongly asymmetrical substrate affinities at both the intracellular and extracellular sides of the transporter. This asymmetry allows SLC7A8 to regulate intracellular amino acid pools (mM concentrations) by exchange with external amino acids (uM concentration range), equilibrating the relative concentrations of different amino acids across the plasma membrane instead of mediating their net uptake. May play an essential role in the reabsorption of neutral amino acids from the epithelial cells to the bloodstream in the kidney. Involved in the uptake of methylmercury (MeHg) when administered as the L-cysteine or D,L-homocysteine complexes, and hence plays a role in metal ion homeostasis and toxicity. Involved in the cellular activity of small molecular weight nitrosothiols, via the stereoselective transport of L-nitrosocysteine (L-CNSO) across the transmembrane. Imports the thyroid hormone diiodothyronine (T2) and to a smaller extent triiodothyronine (T3) but not rT 3 or thyroxine (T4). Mediates the uptake of L-DOPA. May participate in auditory function. The protein is Large neutral amino acids transporter small subunit 2 (Slc7a8) of Rattus norvegicus (Rat).